Here is a 361-residue protein sequence, read N- to C-terminus: Phosphoserine aminotransferase (361 aa).

Residue R42 participates in L-glutamate binding. Pyridoxal 5'-phosphate contacts are provided by residues 76 to 77, W102, T153, D173, and Q196; that span reads AR. K197 carries the post-translational modification N6-(pyridoxal phosphate)lysine. 238-239 contributes to the pyridoxal 5'-phosphate binding site; it reads NT.

The protein belongs to the class-V pyridoxal-phosphate-dependent aminotransferase family. SerC subfamily. In terms of assembly, homodimer. The cofactor is pyridoxal 5'-phosphate.

The protein resides in the cytoplasm. It carries out the reaction O-phospho-L-serine + 2-oxoglutarate = 3-phosphooxypyruvate + L-glutamate. The enzyme catalyses 4-(phosphooxy)-L-threonine + 2-oxoglutarate = (R)-3-hydroxy-2-oxo-4-phosphooxybutanoate + L-glutamate. Its pathway is amino-acid biosynthesis; L-serine biosynthesis; L-serine from 3-phospho-D-glycerate: step 2/3. The protein operates within cofactor biosynthesis; pyridoxine 5'-phosphate biosynthesis; pyridoxine 5'-phosphate from D-erythrose 4-phosphate: step 3/5. Its function is as follows. Catalyzes the reversible conversion of 3-phosphohydroxypyruvate to phosphoserine and of 3-hydroxy-2-oxo-4-phosphonooxybutanoate to phosphohydroxythreonine. The protein is Phosphoserine aminotransferase of Buchnera aphidicola subsp. Acyrthosiphon pisum (strain 5A).